The chain runs to 687 residues: ERI1 exoribonuclease 2 (687 aa).

Positions 38-226 constitute an Exonuclease domain; sequence LIIIDFESTC…DDSRNTAKLA (189 aa). 3 residues coordinate Mg(2+): aspartate 42, glutamate 44, and aspartate 156. Glutamate 44 functions as the Proton acceptor in the catalytic mechanism. An AMP-binding site is contributed by glutamate 44. The active-site Proton acceptor is histidine 213. AMP is bound at residue histidine 213. Aspartate 218 serves as a coordination point for Mg(2+). Cysteine 595, cysteine 597, cysteine 620, and cysteine 633 together coordinate Zn(2+). A GRF-type zinc finger spans residues 595-642; it reads CNCGRRAKRLTVSNAGPNQGKAFYTCSVKKRNEENKKGCDYFKWEQTV.

Belongs to the ERI2 family. Requires Mg(2+) as cofactor.

In Xenopus laevis (African clawed frog), this protein is ERI1 exoribonuclease 2 (eri2).